We begin with the raw amino-acid sequence, 279 residues long: Glutamate racemase (279 aa).

Substrate contacts are provided by residues 13–14 and 45–46; these read DS and YG. The active-site Proton donor/acceptor is the Cys-76. 77–78 lines the substrate pocket; it reads NT. Cys-185 functions as the Proton donor/acceptor in the catalytic mechanism. 186-187 contributes to the substrate binding site; the sequence is TH.

This sequence belongs to the aspartate/glutamate racemases family.

The catalysed reaction is L-glutamate = D-glutamate. The protein operates within cell wall biogenesis; peptidoglycan biosynthesis. Functionally, provides the (R)-glutamate required for cell wall biosynthesis. This is Glutamate racemase from Synechocystis sp. (strain ATCC 27184 / PCC 6803 / Kazusa).